Consider the following 235-residue polypeptide: Probable flavin-dependent thymidylate synthase (235 aa).

Residues Met1–Glu229 enclose the ThyX domain. FAD-binding positions include Ser70 and Arg93 to Arg95. Residues Glu90 to Arg93, Ser103 to Arg105, and Arg168 each bind dUMP. A ThyX motif motif is present at residues Arg93–Ser103. Asn184–Arg186 serves as a coordination point for FAD. Arg195 contacts dUMP. Catalysis depends on Arg195, which acts as the Involved in ionization of N3 of dUMP, leading to its activation.

It belongs to the thymidylate synthase ThyX family. Homotetramer. FAD serves as cofactor.

It carries out the reaction dUMP + (6R)-5,10-methylene-5,6,7,8-tetrahydrofolate + NADPH + H(+) = dTMP + (6S)-5,6,7,8-tetrahydrofolate + NADP(+). It participates in pyrimidine metabolism; dTTP biosynthesis. Its function is as follows. Catalyzes the reductive methylation of 2'-deoxyuridine-5'-monophosphate (dUMP) to 2'-deoxythymidine-5'-monophosphate (dTMP) while utilizing 5,10-methylenetetrahydrofolate (mTHF) as the methyl donor, and NADPH and FADH(2) as the reductant. In Mycobacterium (Mycobacteriophage D29), this protein is Probable flavin-dependent thymidylate synthase (48).